The sequence spans 214 residues: Protein-L-isoaspartate O-methyltransferase (214 aa).

The active site involves S61.

The protein belongs to the methyltransferase superfamily. L-isoaspartyl/D-aspartyl protein methyltransferase family.

It is found in the cytoplasm. The catalysed reaction is [protein]-L-isoaspartate + S-adenosyl-L-methionine = [protein]-L-isoaspartate alpha-methyl ester + S-adenosyl-L-homocysteine. Its function is as follows. Catalyzes the methyl esterification of L-isoaspartyl residues in peptides and proteins that result from spontaneous decomposition of normal L-aspartyl and L-asparaginyl residues. It plays a role in the repair and/or degradation of damaged proteins. This chain is Protein-L-isoaspartate O-methyltransferase, found in Paramagnetospirillum magneticum (strain ATCC 700264 / AMB-1) (Magnetospirillum magneticum).